We begin with the raw amino-acid sequence, 338 residues long: MLSALARPASAALRRSFSTSAQNNAKVAVLGASGGIGQPLSLLLKNSPLVSRLTLYDIAHTPGVAADLSHIETKAAVKGYLGPEQLPDCLKGCDVVVIPAGVPRKPGMTRDDLFNTNATIVATLTAACAQHCPEAMICVIANPVNSTIPITAEVFKKHGVYNPNKIFGVTTLDIVRANTFVAELKGLDPARVNVPVIGGHAGKTIIPLISQCTPKVDFPQDQLTALTGRIQEAGTEVVKAKAGAGSATLSMAYAGARFVFSLVDAMNGKEGVVECSFVKSQETECTYFSTPLLLGKKGIEKNLGIGKVSSFEEKMISDAIPELKASIKKGEDFVKTLK.

A mitochondrion-targeting transit peptide spans 1-24 (MLSALARPASAALRRSFSTSAQNN). NAD(+)-binding positions include 31–37 (GASGGIG) and aspartate 57. An O-linked (GlcNAc) serine glycan is attached at serine 33. N6-acetyllysine; alternate occurs at positions 78 and 91. An N6-succinyllysine; alternate mark is found at lysine 78 and lysine 91. Residues arginine 104 and arginine 110 each contribute to the substrate site. Residues asparagine 117 and 140 to 142 (IAN) each bind NAD(+). Residue asparagine 142 participates in substrate binding. Residue lysine 165 is modified to N6-acetyllysine. Arginine 176 is a binding site for substrate. At lysine 185 the chain carries N6-acetyllysine; alternate. An N6-succinyllysine; alternate modification is found at lysine 185. Histidine 200 acts as the Proton acceptor in catalysis. Lysine 203 carries the post-translational modification N6-succinyllysine. N6-acetyllysine; alternate occurs at positions 215 and 239. Residues lysine 215 and lysine 239 each carry the N6-succinyllysine; alternate modification. Position 239 is an N6-malonyllysine; alternate (lysine 239). Serine 246 is subject to Phosphoserine. An NAD(+)-binding site is contributed by methionine 251. Residue lysine 269 is modified to N6-succinyllysine. An N6-acetyllysine; alternate mark is found at lysine 296, lysine 301, lysine 307, lysine 314, and lysine 324. An N6-succinyllysine; alternate mark is found at lysine 296, lysine 301, lysine 307, lysine 314, and lysine 324. Residue lysine 307 is modified to N6-malonyllysine; alternate. Serine 326 carries the phosphoserine modification. 3 positions are modified to N6-acetyllysine; alternate: lysine 328, lysine 329, and lysine 335. At lysine 328 the chain carries N6-succinyllysine; alternate. Lysine 329 is modified (N6-malonyllysine; alternate). An N6-succinyllysine; alternate modification is found at lysine 335.

The protein belongs to the LDH/MDH superfamily. MDH type 1 family. In terms of assembly, homodimer. Post-translationally, acetylation is enhanced by up to 67% after treatment either with trichostin A (TSA) or with nicotinamide (NAM) with the appearance of tri- and tetraacetylations. Glucose also increases acetylation by about 60%.

Its subcellular location is the mitochondrion matrix. It carries out the reaction (S)-malate + NAD(+) = oxaloacetate + NADH + H(+). With respect to regulation, enzyme activity is enhanced by acetylation. The sequence is that of Malate dehydrogenase, mitochondrial (MDH2) from Homo sapiens (Human).